Here is a 145-residue protein sequence, read N- to C-terminus: Hemoglobin subunit beta-A (145 aa).

Residues 1–145 (MLTAEEKAAV…VANALAHRYH (145 aa)) form the Globin domain. Heme b is bound by residues H62 and H91.

It belongs to the globin family. In terms of assembly, heterotetramer of two alpha chains and two beta chains. As to expression, red blood cells.

Functionally, involved in oxygen transport from the lung to the various peripheral tissues. This Bos javanicus (Wild banteng) protein is Hemoglobin subunit beta-A.